The chain runs to 491 residues: UDP-glycosyltransferase 73C1 (491 aa).

UDP-alpha-D-glucose-binding positions include S292, 352-354 (SPQ), 369-377 (HCGWNSTLE), and 391-394 (FGDQ).

The protein belongs to the UDP-glycosyltransferase family.

In terms of biological role, involved in the O-glucosylation of trans-zeatin and dihydrozeatin. Also active in vitro on cis-zeatin, dihydrozeatin-9-N-Glc, and olomoucine. Can detoxify the explosive 2,4,6-trinitrotoluene in plant by forming O- or C-glucose conjugates. This Arabidopsis thaliana (Mouse-ear cress) protein is UDP-glycosyltransferase 73C1 (UGT73C1).